The chain runs to 341 residues: Ribulose-5-phosphate reductase (341 aa).

Zn(2+) is bound by residues Cys38, His64, Glu65, and Glu144.

The protein belongs to the zinc-containing alcohol dehydrogenase family. The cofactor is Zn(2+).

The enzyme catalyses D-ribitol 5-phosphate + NADP(+) = D-ribulose 5-phosphate + NADPH + H(+). The protein operates within cell wall biogenesis; poly(ribitol phosphate) teichoic acid biosynthesis. Catalyzes the NADPH dependent reduction of D-ribulose 5-phosphate to D-ribitol 5-phosphate. In Bacillus spizizenii (strain ATCC 23059 / NRRL B-14472 / W23) (Bacillus subtilis subsp. spizizenii), this protein is Ribulose-5-phosphate reductase.